The sequence spans 202 residues: Putative 3-methyladenine DNA glycosylase (202 aa).

Belongs to the DNA glycosylase MPG family.

The protein is Putative 3-methyladenine DNA glycosylase of Staphylococcus haemolyticus (strain JCSC1435).